A 275-amino-acid chain; its full sequence is Small ribosomal subunit protein uS3 (275 aa).

The 69-residue stretch at 39–107 (VRIYLKKKLK…PVHVNIEEIR (69 aa)) folds into the KH type-2 domain. Positions 216–275 (AAATSAEPAAEEKKTRRAPSKTAARKPAAGTDKPLVAAKPAVKRVRKVETPAADTQKSGE) are disordered.

This sequence belongs to the universal ribosomal protein uS3 family. In terms of assembly, part of the 30S ribosomal subunit. Forms a tight complex with proteins S10 and S14.

In terms of biological role, binds the lower part of the 30S subunit head. Binds mRNA in the 70S ribosome, positioning it for translation. In Polynucleobacter asymbioticus (strain DSM 18221 / CIP 109841 / QLW-P1DMWA-1) (Polynucleobacter necessarius subsp. asymbioticus), this protein is Small ribosomal subunit protein uS3.